A 342-amino-acid polypeptide reads, in one-letter code: Dihydroorotase (342 aa).

Residues His-13 and His-15 each contribute to the Zn(2+) site. Substrate contacts are provided by residues 15–17 and Asn-41; that span reads HLR. Residues Lys-97, His-134, and His-172 each coordinate Zn(2+). An N6-carboxylysine modification is found at Lys-97. His-134 provides a ligand contact to substrate. Leu-217 is a binding site for substrate. Asp-245 lines the Zn(2+) pocket. The active site involves Asp-245. Positions 249 and 261 each coordinate substrate.

This sequence belongs to the metallo-dependent hydrolases superfamily. DHOase family. Class II DHOase subfamily. In terms of assembly, homodimer. Zn(2+) is required as a cofactor.

It catalyses the reaction (S)-dihydroorotate + H2O = N-carbamoyl-L-aspartate + H(+). It functions in the pathway pyrimidine metabolism; UMP biosynthesis via de novo pathway; (S)-dihydroorotate from bicarbonate: step 3/3. Its function is as follows. Catalyzes the reversible cyclization of carbamoyl aspartate to dihydroorotate. The sequence is that of Dihydroorotase from Shewanella loihica (strain ATCC BAA-1088 / PV-4).